The sequence spans 210 residues: Orotate phosphoribosyltransferase (210 aa).

Residues R94, K98, H100, and E120–S128 contribute to the 5-phospho-alpha-D-ribose 1-diphosphate site. S124 is a binding site for orotate.

The protein belongs to the purine/pyrimidine phosphoribosyltransferase family. PyrE subfamily. As to quaternary structure, homodimer. Mg(2+) serves as cofactor.

The enzyme catalyses orotidine 5'-phosphate + diphosphate = orotate + 5-phospho-alpha-D-ribose 1-diphosphate. The protein operates within pyrimidine metabolism; UMP biosynthesis via de novo pathway; UMP from orotate: step 1/2. Catalyzes the transfer of a ribosyl phosphate group from 5-phosphoribose 1-diphosphate to orotate, leading to the formation of orotidine monophosphate (OMP). The sequence is that of Orotate phosphoribosyltransferase from Bacillus cereus (strain ATCC 10987 / NRS 248).